We begin with the raw amino-acid sequence, 347 residues long: MSYFYRLKLMKEAVLVKLPFTSLPLLLQTLSRKSRDMEIKNYSSSTSGFILLGLSSNPQLQKPLFAIFLIMYLLAAVGNVLIIPAIYSDPRLHTPMYFFLSNLSFMDICFTTVIVPKMLVNFLSETKVISYVGCLAQMYFFMAFGNTDSYLLASMAIDRLVAICNPLHYDVVMKPRHCLLMLLGSCSISHLHSLFRVLLMSRLSFCASHIIKHFFCDTQPVLKLSCSDTSSSQMVVMTETLAVIVTPFLCIIFSYLRIMVTVLRIPSAAGKWKAFSTCGSHLTAVALFYGSIIYVYFRPLSMYSVVRDRVATVMYTVVTPMLNPFIYSLRNKDMKRGLKKLQDRIYR.

The Extracellular portion of the chain corresponds to 1-62 (MSYFYRLKLM…GLSSNPQLQK (62 aa)). A glycan (N-linked (GlcNAc...) asparagine) is linked at N41. The chain crosses the membrane as a helical span at residues 63–86 (PLFAIFLIMYLLAAVGNVLIIPAI). The Cytoplasmic portion of the chain corresponds to 87–94 (YSDPRLHT). The helical transmembrane segment at 95-116 (PMYFFLSNLSFMDICFTTVIVP) threads the bilayer. The Extracellular segment spans residues 117 to 137 (KMLVNFLSETKVISYVGCLAQ). C134 and C226 are joined by a disulfide. A helical transmembrane segment spans residues 138-157 (MYFFMAFGNTDSYLLASMAI). The Cytoplasmic portion of the chain corresponds to 158 to 176 (DRLVAICNPLHYDVVMKPR). A helical membrane pass occupies residues 177–195 (HCLLMLLGSCSISHLHSLF). Residues 196–233 (RVLLMSRLSFCASHIIKHFFCDTQPVLKLSCSDTSSSQ) are Extracellular-facing. Residues 234–256 (MVVMTETLAVIVTPFLCIIFSYL) traverse the membrane as a helical segment. The Cytoplasmic portion of the chain corresponds to 257 to 273 (RIMVTVLRIPSAAGKWK). The helical transmembrane segment at 274-296 (AFSTCGSHLTAVALFYGSIIYVY) threads the bilayer. Residues 297–309 (FRPLSMYSVVRDR) are Extracellular-facing. Residues 310–329 (VATVMYTVVTPMLNPFIYSL) form a helical membrane-spanning segment. At 330 to 347 (RNKDMKRGLKKLQDRIYR) the chain is on the cytoplasmic side.

It belongs to the G-protein coupled receptor 1 family.

Its subcellular location is the cell membrane. Functionally, odorant receptor. The protein is Olfactory receptor 1L6 (OR1L6) of Homo sapiens (Human).